Consider the following 341-residue polypeptide: Serine/threonine-protein kinase PDIK1L (341 aa).

One can recognise a Protein kinase domain in the interval 8–334 (YDLIREVGRG…LELRLVQIAF (327 aa)). Residues 14–22 (VGRGSYGVV) and Lys-37 each bind ATP. Residue Asp-164 is the Proton acceptor of the active site.

Belongs to the protein kinase superfamily. Ser/Thr protein kinase family.

The protein resides in the nucleus. The catalysed reaction is L-seryl-[protein] + ATP = O-phospho-L-seryl-[protein] + ADP + H(+). It carries out the reaction L-threonyl-[protein] + ATP = O-phospho-L-threonyl-[protein] + ADP + H(+). This chain is Serine/threonine-protein kinase PDIK1L (Pdik1l), found in Mus musculus (Mouse).